The following is a 585-amino-acid chain: Lipoprotein LpqB (585 aa).

The first 18 residues, 1-18 (MKRLLTVLVVGLVALVSG), serve as a signal peptide directing secretion. The N-palmitoyl cysteine moiety is linked to residue Cys19. Cys19 is lipidated: S-diacylglycerol cysteine. Residues 24-46 (SSSSPQAIGTVERPAPPSLPKPT) are disordered. Residues 37 to 46 (PAPPSLPKPT) show a composition bias toward pro residues.

Belongs to the LpqB lipoprotein family. Interacts with MtrB, probably extracytoplasmically via its sensor domain.

Its subcellular location is the cell membrane. The protein resides in the secreted. It localises to the cell wall. May modulate activity of the MtrAB system in controlling homeostasis of the cell wall and cell division. This Mycolicibacterium smegmatis (strain ATCC 700084 / mc(2)155) (Mycobacterium smegmatis) protein is Lipoprotein LpqB.